A 265-amino-acid chain; its full sequence is Glutamate racemase (265 aa).

Substrate is bound by residues Asp-12–Ser-13 and Tyr-44–Gly-45. Cys-75 (proton donor/acceptor) is an active-site residue. Substrate is bound at residue Asn-76–Thr-77. Residue Cys-186 is the Proton donor/acceptor of the active site. Thr-187 to His-188 is a substrate binding site.

The protein belongs to the aspartate/glutamate racemases family.

The catalysed reaction is L-glutamate = D-glutamate. The protein operates within cell wall biogenesis; peptidoglycan biosynthesis. Functionally, provides the (R)-glutamate required for cell wall biosynthesis. The polypeptide is Glutamate racemase (Pseudomonas putida (strain GB-1)).